The chain runs to 469 residues: Glutamate--tRNA ligase (469 aa).

Positions 9 to 19 (PSPTGFLHVGG) match the 'HIGH' region motif. Zn(2+) contacts are provided by C98, C100, C125, and D127. Residues 236 to 240 (KLSKR) carry the 'KMSKS' region motif. K239 lines the ATP pocket.

This sequence belongs to the class-I aminoacyl-tRNA synthetase family. Glutamate--tRNA ligase type 1 subfamily. As to quaternary structure, monomer. It depends on Zn(2+) as a cofactor.

It is found in the cytoplasm. It catalyses the reaction tRNA(Glu) + L-glutamate + ATP = L-glutamyl-tRNA(Glu) + AMP + diphosphate. In terms of biological role, catalyzes the attachment of glutamate to tRNA(Glu) in a two-step reaction: glutamate is first activated by ATP to form Glu-AMP and then transferred to the acceptor end of tRNA(Glu). In Shewanella sp. (strain W3-18-1), this protein is Glutamate--tRNA ligase.